A 350-amino-acid polypeptide reads, in one-letter code: Ion-translocating oxidoreductase complex subunit D (350 aa).

3 helical membrane-spanning segments follow: residues 25–45 (ILCA…GTVI), 89–109 (IPPL…IVIV), and 129–149 (VMLL…SVIA). At Thr-185 the chain carries FMN phosphoryl threonine. The next 5 membrane-spanning stretches (helical) occupy residues 212 to 232 (GFGV…LVML), 239 to 259 (WHIT…GYLL), 264 to 284 (FTGP…FFIA), 298 to 318 (LVFG…GGYP), and 319 to 339 (DAFA…DHYM).

This sequence belongs to the NqrB/RnfD family. As to quaternary structure, the complex is composed of six subunits: RnfA, RnfB, RnfC, RnfD, RnfE and RnfG. FMN serves as cofactor.

Its subcellular location is the cell inner membrane. In terms of biological role, part of a membrane-bound complex that couples electron transfer with translocation of ions across the membrane. In Shewanella sediminis (strain HAW-EB3), this protein is Ion-translocating oxidoreductase complex subunit D.